Here is a 597-residue protein sequence, read N- to C-terminus: Plasmepsin V (597 aa).

Residues 1 to 551 lie on the Lumenal side of the membrane; the sequence is MNNYFLRKEN…EKENIFLKVS (551 aa). Residues 33–88 adopt a coiled-coil conformation; that stretch reads CNNVENKIDNVGKKIENVGKKIGDMENKNDNVENKNDNVENKNDNVGNKNDNVKNA. The span at 58 to 75 shows a compositional bias: basic and acidic residues; that stretch reads ENKNDNVENKNDNVENKN. The segment at 58–83 is disordered; sequence ENKNDNVENKNDNVENKNDNVGNKND. Residues 107 to 521 form the Peptidase A1 domain; sequence YFLDIDIGKP…DLQQNQIAFI (415 aa). The active site involves Asp-125. Intrachain disulfides connect Cys-135-Cys-218, Cys-138-Cys-141, Cys-162-Cys-173, Cys-167-Cys-178, Cys-266-Cys-525, Cys-396-Cys-441, and Cys-450-Cys-486. The span at 289 to 298 shows a compositional bias: basic and acidic residues; the sequence is KEKQKMDKSD. The segment at 289–323 is disordered; the sequence is KEKQKMDKSDNNSSNKGNVSIKLKNNDKNDDEENN. The span at 299–311 shows a compositional bias: low complexity; the sequence is NNSSNKGNVSIKL. Asp-372 is an active-site residue. The helical transmembrane segment at 552 to 572 threads the bilayer; that stretch reads YINLYCLWLLLALTILLSLIL. The Cytoplasmic portion of the chain corresponds to 573–597; that stretch reads YVRKMFYMDYFPLSDQNKSPIQEST.

It belongs to the peptidase A1 family. Component of a complex composed of SPC25 and PMV; the interaction is mediated via the transmembrane domains. The complex interacts with the SEC61 channel-forming translocon complex and is involved in the recognition and import of PEXEL motif-containing proteins into the ER for subsequent export. In terms of processing, it is not clear if the zymogen has a cleavable propeptide. In vitro, appears to be cleaved between Asn-87 and Ala-88. Cleavage of the putative propeptide is dispensable for catalytic activity.

The protein resides in the endoplasmic reticulum membrane. During the asexual blood stage, plays an essential role in the export of several proteins into the host erythrocytes by cleaving the pentameric localization motif RxLxE/Q/D (termed Plasmodium export element (PEXEL)) located downstream of the N-terminal secretory signal sequence. Specifically, cleaves after the leucine residue in the RxLxE/Q/D (or RxLxxE) motif of exported proteins including RESA, EMP2, EMP3, KAHRP, RIF/Rifin and STEVOR. Also, by regulating protein export, plays an essential role in gametocyte development and thus parasite transmission to the mosquito vector. The protein is Plasmepsin V of Plasmodium falciparum (isolate HB3).